Here is a 55-residue protein sequence, read N- to C-terminus: Photosystem I reaction center subunit IX (55 aa).

The chain crosses the membrane as a helical span at residues 7–27; it reads YLSVAPVLSTLWFGSLAGLLI.

The protein belongs to the PsaJ family.

It localises to the plastid. It is found in the chloroplast thylakoid membrane. Functionally, may help in the organization of the PsaE and PsaF subunits. The chain is Photosystem I reaction center subunit IX from Gossypium barbadense (Sea Island cotton).